A 139-amino-acid polypeptide reads, in one-letter code: Large ribosomal subunit protein uL16c (139 aa).

The segment covering 1-17 (MLSPKKTKFRKQHRGRM) has biased composition (basic residues). Residues 1-23 (MLSPKKTKFRKQHRGRMKGSASK) form a disordered region.

It belongs to the universal ribosomal protein uL16 family. Part of the 50S ribosomal subunit.

It is found in the plastid. The protein localises to the chloroplast. This Porphyra purpurea (Red seaweed) protein is Large ribosomal subunit protein uL16c.